The primary structure comprises 126 residues: Large ribosomal subunit protein bL12 (126 aa).

It belongs to the bacterial ribosomal protein bL12 family. Homodimer. Part of the ribosomal stalk of the 50S ribosomal subunit. Forms a multimeric L10(L12)X complex, where L10 forms an elongated spine to which 2 to 4 L12 dimers bind in a sequential fashion. Binds GTP-bound translation factors.

Its function is as follows. Forms part of the ribosomal stalk which helps the ribosome interact with GTP-bound translation factors. Is thus essential for accurate translation. In Chlorobium phaeobacteroides (strain BS1), this protein is Large ribosomal subunit protein bL12.